We begin with the raw amino-acid sequence, 281 residues long: MVEFVEINGAQLAYRICGPEDAPLVITLHGGRGMGNHQSDFKAFSPLGDSYRILSFDYRGHGQSSRTKPYTFEQIVDDIDGMRARFAGPEKQVIILGGSFGGFLAQQYAIKYASHVSHLILRGTAPSHHHEEGAIKTLEQRLSKVPSFSIEMLKDKVFGAFDSDLEFRMVHLVMSPLYSESFDANAALQSCLNNVYNAESHNDLYSEKEKYFDYTKDLHRITAKTLVVVGDKDWICPPENSKFIAKEIKDAELFLVENANHSVHVEKNDLVVKKIRSHLEK.

The region spanning 23–267 (PLVITLHGGR…NANHSVHVEK (245 aa)) is the AB hydrolase-1 domain.

It belongs to the peptidase S33 family.

It catalyses the reaction Release of N-terminal proline from a peptide.. Proline iminopeptidase; part of the gene cluster that mediates the biosynthesis of dihydroxynaphthalene (DHN)-melanin, a bluish-green pigment forming a dark layer in the conidial wall that protects the conidia from UV radiations. The first step of the pathway is the production of the pentaketide 1,3,6,8-tetrahydroxynaphthalene (1,3,6,8-THN or T4HN) by the polyketide synthase PfmaE though condensation of acetyl-CoA with malonyl-CoA. T4HN is not stable and easily oxidizes into the stable form flaviolin. T4HN is also substrate of the hydroxynaphthalene reductase PfmaG to yield scytalone. The scytalone dehydratase PfmaJ then reduces scytalone to 1,3,8-THN. 1,3,8-THN is then substrate of the hydroxynaphthalene reductase PfmaI to yield vermelone. Vermelone is further converted by the multicopper oxidase PfmaD to 1,8-DHN. Finally the laccase PFICI_06862 transforms 1,8-DHN to DHN-melanin. The roles of the 5-oxoprolinase PfmaA and the proline iminopeptidase PfmaB within the cluster have not been elucidated yet. This Pestalotiopsis fici (strain W106-1 / CGMCC3.15140) protein is Proline iminopeptidase PfmaB.